The primary structure comprises 387 residues: Xylose isomerase (387 aa).

Active-site residues include His53 and Asp56. Residues Glu180, Glu216, His219, Asp244, Asp254, Asp256, and Asp286 each contribute to the Mg(2+) site.

It belongs to the xylose isomerase family. Homotetramer. Mg(2+) serves as cofactor.

The protein localises to the cytoplasm. The catalysed reaction is alpha-D-xylose = alpha-D-xylulofuranose. This chain is Xylose isomerase (xylA), found in Thermus thermophilus (strain ATCC 27634 / DSM 579 / HB8).